The following is a 544-amino-acid chain: Chaperonin GroEL (544 aa).

Residues 30–33 (TLGP), lysine 51, 87–91 (DGTTT), glycine 415, and aspartate 495 contribute to the ATP site.

The protein belongs to the chaperonin (HSP60) family. In terms of assembly, forms a cylinder of 14 subunits composed of two heptameric rings stacked back-to-back. Interacts with the co-chaperonin GroES.

The protein localises to the cytoplasm. It catalyses the reaction ATP + H2O + a folded polypeptide = ADP + phosphate + an unfolded polypeptide.. Functionally, together with its co-chaperonin GroES, plays an essential role in assisting protein folding. The GroEL-GroES system forms a nano-cage that allows encapsulation of the non-native substrate proteins and provides a physical environment optimized to promote and accelerate protein folding. The protein is Chaperonin GroEL of Neisseria meningitidis serogroup B (strain ATCC BAA-335 / MC58).